The primary structure comprises 356 residues: Viral cathepsin (356 aa).

The first 40 residues, 1–40, serve as a signal peptide directing secretion; it reads MYANALVCLNPSFIKLQFHIVCTMNIIGIVTLALCSAASA. The propeptide at 41–144 is activation peptide; it reads ADEGAAYNLQ…IILNQPPDKG (104 aa). 3 disulfides stabilise this stretch: cysteine 165/cysteine 206, cysteine 199/cysteine 239, and cysteine 295/cysteine 343. Cysteine 168 is a catalytic residue. Catalysis depends on residues histidine 302 and asparagine 322.

It belongs to the peptidase C1 family. In terms of processing, synthesized as an inactive proenzyme and activated by proteolytic removal of the inhibitory propeptide.

The enzyme catalyses Endopeptidase of broad specificity, hydrolyzing substrates of both cathepsin L and cathepsin B.. Its function is as follows. Cysteine protease that plays an essential role in host liquefaction to facilitate horizontal transmission of the virus. May participate in the degradation of foreign protein expressed by the baculovirus system. The sequence is that of Viral cathepsin (VCATH) from Lepidoptera (butterflies and moths).